Reading from the N-terminus, the 99-residue chain is Large ribosomal subunit protein uL23 (99 aa).

It belongs to the universal ribosomal protein uL23 family. As to quaternary structure, part of the 50S ribosomal subunit. Contacts protein L29, and trigger factor when it is bound to the ribosome.

In terms of biological role, one of the early assembly proteins it binds 23S rRNA. One of the proteins that surrounds the polypeptide exit tunnel on the outside of the ribosome. Forms the main docking site for trigger factor binding to the ribosome. This is Large ribosomal subunit protein uL23 from Hyphomonas neptunium (strain ATCC 15444).